Consider the following 260-residue polypeptide: Vesicle-associated membrane protein/synaptobrevin-binding protein (260 aa).

At 1-238 the chain is on the cytoplasmic side; sequence MASHEQALIL…SPAPAAAVRA (238 aa). In terms of domain architecture, MSP spans 7–125; that stretch reads ALILEPAGEL…MDTKLRCVFE (119 aa). Residues 127 to 177 form a disordered region; the sequence is PDGSHQAPASDASRATDAGAHFSESALEDPTVASRKTETQSPKRVGAVGSA. The stretch at 172–216 forms a coiled coil; it reads GAVGSAGEDVKKLQHELKKAQSEITSLKGENSQLKDEGIRLRKVA. Residues 239–259 traverse the membrane as a helical; Anchor for type IV membrane protein segment; it reads FPPVVYVVAAIILGLIIGKFL.

It belongs to the VAMP-associated protein (VAP) (TC 9.B.17) family. In terms of tissue distribution, detected only in the central nervous system and the gill of aplysia.

The protein localises to the membrane. It localises to the synapse. Its subcellular location is the synaptosome. Its function is as follows. Required for neurotransmitter release. Interacts with VAMP. In Aplysia californica (California sea hare), this protein is Vesicle-associated membrane protein/synaptobrevin-binding protein.